Reading from the N-terminus, the 142-residue chain is Prefoldin subunit alpha (142 aa).

Belongs to the prefoldin subunit alpha family. As to quaternary structure, heterohexamer of two alpha and four beta subunits.

The protein resides in the cytoplasm. Its function is as follows. Molecular chaperone capable of stabilizing a range of proteins. Seems to fulfill an ATP-independent, HSP70-like function in archaeal de novo protein folding. This Methanosarcina mazei (strain ATCC BAA-159 / DSM 3647 / Goe1 / Go1 / JCM 11833 / OCM 88) (Methanosarcina frisia) protein is Prefoldin subunit alpha.